The primary structure comprises 120 residues: MEKLFNRSDRIAQELQKKIAAIIQHSLKDPRIKTIITVSEVQVSKDLSYAQIFVSFLESDNNEKVKKKITILNRASSYIRKLLCKRMKLRIVPNIIFHHDDSFLKGNKISCILENLTKKE.

The protein belongs to the RbfA family. In terms of assembly, monomer. Binds 30S ribosomal subunits, but not 50S ribosomal subunits or 70S ribosomes.

It localises to the cytoplasm. One of several proteins that assist in the late maturation steps of the functional core of the 30S ribosomal subunit. Associates with free 30S ribosomal subunits (but not with 30S subunits that are part of 70S ribosomes or polysomes). Required for efficient processing of 16S rRNA. May interact with the 5'-terminal helix region of 16S rRNA. The sequence is that of Ribosome-binding factor A from Buchnera aphidicola subsp. Acyrthosiphon pisum (strain 5A).